The primary structure comprises 497 residues: uncharacterized protein (497 aa).

A run of 11 helical transmembrane segments spans residues 91–111 (WVGTSFYLGFMVFSLPLSTLL), 119–139 (VTSAFIVAWGILMTLTCLVHS), 149–169 (LLGILESVITPAFVLFIAQWY), 179–199 (AFLVAWNGLGGLIGGSMSYGL), 215–235 (ILFIITGLITIINGVFIFIHI), 283–303 (MYLYFFLQIAVAIPNGGLSNF), 319–339 (LLMNMPTSSISFAALTLFGLI), 347–367 (MDIALVGLAINLTSGSLIAFA), 374–394 (LAGYWLFGISPIPYICILSCI), 406–426 (FMSAVSMIGYCVGNMVGPQTF), and 439–459 (VSFVVCYCVAIFIIIAIYAVN).

It belongs to the major facilitator superfamily. Allantoate permease family.

It is found in the golgi apparatus. The protein localises to the membrane. This is an uncharacterized protein from Schizosaccharomyces pombe (strain 972 / ATCC 24843) (Fission yeast).